Consider the following 84-residue polypeptide: Transmembrane protein EP84R (84 aa).

2 helical membrane passes run 31–51 and 60–80; these read VIGV…IIIL and AASI…FLIY.

It belongs to the asfivirus EP84R family.

Its subcellular location is the virion membrane. The sequence is that of Transmembrane protein EP84R from Ornithodoros (relapsing fever ticks).